A 509-amino-acid polypeptide reads, in one-letter code: MATCSWAATTAAAAPPRPPARCRSRVAALRRTAAASAAAASCVLAEAPKGLKVEQADAVEPAAAAAARRDVGPDTVASIILGGGAGTRLFPLTRTRAKPAVPVGGCYRLIDIPMSNCINSKINKIYVLTQFNSQSLNRHIARTYNIGEGVGFGDGFVEVLAATQTTGESGKRWFQGTADAVRQFLWLFEDARLKRIENILILSGDHLYRMDYMDFVQKHVDKGADISVACVPVDESRASDFGLMKTDKNGRITDFLEKPKDESLKSMQLDMGTFGLRPEVADTCKYMASMGIYVFRTDILLRLLRGHYPTANDFGSEVIPMAAKDYNVQAYLFDGYWEDIGTIKSFFEANLALTDQSPNFYFYDPVKPIFTSPRFLPPTKVENCKVLNSIVSHGCFLTECSVDRSVIGVRSRLEPGVQLKDTMMMGADYYQTEAERFSELSDGKVPVGVGENTIIRNCIIDKNARIGKNVMIMNSQNVQEAERPLEGFYIRSGITVVLKNAVIPDGTVI.

The N-terminal 36 residues, 1–36, are a transit peptide targeting the chloroplast; that stretch reads MATCSWAATTAAAAPPRPPARCRSRVAALRRTAAAS.

Belongs to the bacterial/plant glucose-1-phosphate adenylyltransferase family. In terms of assembly, heterotetramer composed of two small and two large subunits. As to expression, expressed in leaves and stems.

It is found in the plastid. The protein localises to the chloroplast. It catalyses the reaction alpha-D-glucose 1-phosphate + ATP + H(+) = ADP-alpha-D-glucose + diphosphate. Its pathway is glycan biosynthesis; starch biosynthesis. Its activity is regulated as follows. Activated by 3'phosphoglycerate, inhibited by orthophosphate. Allosteric regulation. In terms of biological role, involved in synthesis of starch. Catalyzes the synthesis of ADP-glucose, a molecule that serves as an activated glycosyl donor for alpha-1,4-glucan synthesis. Essential for starch synthesis in leaf chloroplasts. This chain is Glucose-1-phosphate adenylyltransferase large subunit 4, chloroplastic/amyloplastic, found in Oryza sativa subsp. japonica (Rice).